A 196-amino-acid chain; its full sequence is Neuropeptide prohormone-4 (196 aa).

A signal peptide spans 1 to 25; the sequence is MSSPLRMDVTFLLAAIAVTWVCGLK. One can recognise an LDL-receptor class A domain in the interval 50 to 90; sequence DCDIASPFKCEESPTCLRLFQVCNGRWDCEHGSDEDNALCA. Disulfide bonds link cysteine 51–cysteine 65, cysteine 59–cysteine 78, and cysteine 72–cysteine 89.

In terms of tissue distribution, expressed by the venom duct.

Its subcellular location is the secreted. This is Neuropeptide prohormone-4 from Conus victoriae (Queen Victoria cone).